Reading from the N-terminus, the 306-residue chain is tRNA pseudouridine synthase B (306 aa).

Residue Asp47 is the Nucleophile of the active site.

It belongs to the pseudouridine synthase TruB family. Type 1 subfamily.

It carries out the reaction uridine(55) in tRNA = pseudouridine(55) in tRNA. In terms of biological role, responsible for synthesis of pseudouridine from uracil-55 in the psi GC loop of transfer RNAs. The sequence is that of tRNA pseudouridine synthase B from Neisseria gonorrhoeae (strain ATCC 700825 / FA 1090).